An 80-amino-acid polypeptide reads, in one-letter code: Small ribosomal subunit protein bS16 (80 aa).

The protein belongs to the bacterial ribosomal protein bS16 family.

In Laribacter hongkongensis (strain HLHK9), this protein is Small ribosomal subunit protein bS16.